The sequence spans 90 residues: Small ribosomal subunit protein uS15c (90 aa).

This sequence belongs to the universal ribosomal protein uS15 family. In terms of assembly, part of the 30S ribosomal subunit.

It is found in the plastid. Its subcellular location is the chloroplast. The chain is Small ribosomal subunit protein uS15c (rps15-A) from Zea mays (Maize).